A 248-amino-acid chain; its full sequence is Ubiquinone/menaquinone biosynthesis C-methyltransferase UbiE (248 aa).

S-adenosyl-L-methionine is bound by residues Ser-68 and Asp-92.

The protein belongs to the class I-like SAM-binding methyltransferase superfamily. MenG/UbiE family.

It catalyses the reaction a 2-demethylmenaquinol + S-adenosyl-L-methionine = a menaquinol + S-adenosyl-L-homocysteine + H(+). The catalysed reaction is a 2-methoxy-6-(all-trans-polyprenyl)benzene-1,4-diol + S-adenosyl-L-methionine = a 5-methoxy-2-methyl-3-(all-trans-polyprenyl)benzene-1,4-diol + S-adenosyl-L-homocysteine + H(+). It participates in quinol/quinone metabolism; menaquinone biosynthesis; menaquinol from 1,4-dihydroxy-2-naphthoate: step 2/2. It functions in the pathway cofactor biosynthesis; ubiquinone biosynthesis. Functionally, methyltransferase required for the conversion of demethylmenaquinol (DMKH2) to menaquinol (MKH2) and the conversion of 2-polyprenyl-6-methoxy-1,4-benzoquinol (DDMQH2) to 2-polyprenyl-3-methyl-6-methoxy-1,4-benzoquinol (DMQH2). This chain is Ubiquinone/menaquinone biosynthesis C-methyltransferase UbiE, found in Rickettsia bellii (strain OSU 85-389).